A 407-amino-acid polypeptide reads, in one-letter code: Glucose-1-phosphate adenylyltransferase 2 (407 aa).

Residues Tyr-97, Gly-162, 177–178 (EK), and Ser-195 contribute to the alpha-D-glucose 1-phosphate site.

This sequence belongs to the bacterial/plant glucose-1-phosphate adenylyltransferase family. In terms of assembly, homotetramer.

The catalysed reaction is alpha-D-glucose 1-phosphate + ATP + H(+) = ADP-alpha-D-glucose + diphosphate. It functions in the pathway glycan biosynthesis; glycogen biosynthesis. Functionally, involved in the biosynthesis of ADP-glucose, a building block required for the elongation reactions to produce glycogen. Catalyzes the reaction between ATP and alpha-D-glucose 1-phosphate (G1P) to produce pyrophosphate and ADP-Glc. The protein is Glucose-1-phosphate adenylyltransferase 2 of Vibrio cholerae serotype O1 (strain ATCC 39315 / El Tor Inaba N16961).